We begin with the raw amino-acid sequence, 47 residues long: MRKIPLNCEACGNRNYNVPKQEGTATRLTLKKYCPKCNAHTIHKESK.

Belongs to the bacterial ribosomal protein bL33 family.

This Staphylococcus aureus (strain MRSA252) protein is Large ribosomal subunit protein bL33C.